The chain runs to 274 residues: N-acetylmuramic acid 6-phosphate etherase (274 aa).

The region spanning Ile-52–Arg-215 is the SIS domain. Catalysis depends on Glu-80, which acts as the Proton donor. Glu-111 is a catalytic residue.

It belongs to the GCKR-like family. MurNAc-6-P etherase subfamily. In terms of assembly, homodimer.

It carries out the reaction N-acetyl-D-muramate 6-phosphate + H2O = N-acetyl-D-glucosamine 6-phosphate + (R)-lactate. It participates in amino-sugar metabolism; N-acetylmuramate degradation. Functionally, specifically catalyzes the cleavage of the D-lactyl ether substituent of MurNAc 6-phosphate, producing GlcNAc 6-phosphate and D-lactate. This Porphyromonas gingivalis (strain ATCC BAA-308 / W83) protein is N-acetylmuramic acid 6-phosphate etherase.